Here is a 430-residue protein sequence, read N- to C-terminus: tRNA(Ile)-lysidine synthase (430 aa).

ATP is bound at residue 21–26 (SGGLDS).

It belongs to the tRNA(Ile)-lysidine synthase family.

It is found in the cytoplasm. The catalysed reaction is cytidine(34) in tRNA(Ile2) + L-lysine + ATP = lysidine(34) in tRNA(Ile2) + AMP + diphosphate + H(+). Ligates lysine onto the cytidine present at position 34 of the AUA codon-specific tRNA(Ile) that contains the anticodon CAU, in an ATP-dependent manner. Cytidine is converted to lysidine, thus changing the amino acid specificity of the tRNA from methionine to isoleucine. This Salmonella schwarzengrund (strain CVM19633) protein is tRNA(Ile)-lysidine synthase.